The primary structure comprises 129 residues: MKTVQFCFLFCCWKAICCNSCELTNITIAIENEECHFCISINTTWCAGYCYTRDLVYKDPATPNIQTTCTFKELVYETVRVPGCAHHADSFYTYPVATQCHCGKCDSDSTDCTMQGLGPDYCSFSEMKE.

Positions methionine 1–serine 20 are cleaved as a signal peptide. Disulfide bonds link cysteine 21–cysteine 69, cysteine 35–cysteine 84, cysteine 38–cysteine 122, cysteine 46–cysteine 100, cysteine 50–cysteine 102, and cysteine 105–cysteine 112. 2 N-linked (GlcNAc...) asparagine glycosylation sites follow: asparagine 25 and asparagine 42.

This sequence belongs to the glycoprotein hormones subunit beta family. As to quaternary structure, heterodimer. The active follitropin is a heterodimer composed of an alpha chain/CGA shared with other hormones and a unique beta chain/FSHB shown here.

The protein localises to the secreted. Functionally, together with the alpha chain CGA constitutes follitropin, the follicle-stimulating hormone, and provides its biological specificity to the hormone heterodimer. Binds FSHR, a G protein-coupled receptor, on target cells to activate downstream signaling pathways. Follitropin is involved in follicle development and spermatogenesis in reproductive organs. This is Follitropin subunit beta (FSHB) from Aotus nancymaae (Ma's night monkey).